A 271-amino-acid polypeptide reads, in one-letter code: 4-hydroxy-tetrahydrodipicolinate reductase (271 aa).

NAD(+)-binding positions include 11 to 16 (GAAGRM), glutamate 37, 102 to 104 (GTT), and 126 to 129 (AGNM). Histidine 159 functions as the Proton donor/acceptor in the catalytic mechanism. Histidine 160 lines the (S)-2,3,4,5-tetrahydrodipicolinate pocket. Lysine 163 serves as the catalytic Proton donor. 169-170 (GT) is a binding site for (S)-2,3,4,5-tetrahydrodipicolinate.

This sequence belongs to the DapB family.

It localises to the cytoplasm. The enzyme catalyses (S)-2,3,4,5-tetrahydrodipicolinate + NAD(+) + H2O = (2S,4S)-4-hydroxy-2,3,4,5-tetrahydrodipicolinate + NADH + H(+). The catalysed reaction is (S)-2,3,4,5-tetrahydrodipicolinate + NADP(+) + H2O = (2S,4S)-4-hydroxy-2,3,4,5-tetrahydrodipicolinate + NADPH + H(+). It participates in amino-acid biosynthesis; L-lysine biosynthesis via DAP pathway; (S)-tetrahydrodipicolinate from L-aspartate: step 4/4. In terms of biological role, catalyzes the conversion of 4-hydroxy-tetrahydrodipicolinate (HTPA) to tetrahydrodipicolinate. The protein is 4-hydroxy-tetrahydrodipicolinate reductase of Parvibaculum lavamentivorans (strain DS-1 / DSM 13023 / NCIMB 13966).